Consider the following 834-residue polypeptide: Translation factor GUF1 homolog, mitochondrial (834 aa).

The transit peptide at 1–66 (MKLCGVRSSG…RPLLAEPRRY (66 aa)) directs the protein to the mitochondrion. Positions 129-314 (ACIRNVSVVA…HIIDKVPPPC (186 aa)) constitute a tr-type G domain. GTP-binding positions include 138 to 145 (AHVDHGKT), 205 to 209 (DTPGH), and 259 to 262 (TKMD). Disordered stretches follow at residues 363 to 385 (GAAS…ASGG) and 476 to 507 (TGSP…SSSV). A compositionally biased stretch (low complexity) spans 488–507 (ATAAETASSDDASGSGSSSV).

The protein belongs to the TRAFAC class translation factor GTPase superfamily. Classic translation factor GTPase family. LepA subfamily.

It localises to the mitochondrion inner membrane. The enzyme catalyses GTP + H2O = GDP + phosphate + H(+). Its function is as follows. Promotes mitochondrial protein synthesis. May act as a fidelity factor of the translation reaction, by catalyzing a one-codon backward translocation of tRNAs on improperly translocated ribosomes. Binds to mitochondrial ribosomes in a GTP-dependent manner. The sequence is that of Translation factor GUF1 homolog, mitochondrial from Leishmania infantum.